A 387-amino-acid chain; its full sequence is MFSWLLRIASACLGPARRYARTRKDEDGGDNGGGVADGLLWSRDLGRHAAGEFSFAVVQANEALEDHSQVETGSAATFVGVYDGHGGADAARFISDHLFAHLIRLARESETVSEEVVRGAFSATEEGFLTLVRRTQFLKPMIAAVGSCCLVGIIWRGVLYVANLGDSRAVVGYLGRTNKITAEQITRDHNACKEEVRQELISRHPDDSQIVVLKHGVWRIKGIIQVSRTIGDAYLKRREFALDPSITRFRLSEPLRRPVLTAEPSICTRVLSLQDQFVIFASDGLWEHLTNQQAVDIVYKNPRAGIAKRLVNTALKEAARKREMRFVDLKKVEKGVRRFFHDDITVVVVYIDHELLQEKNVSVPELSVRGFVDSVGPSRISGFDAIS.

One can recognise a PPM-type phosphatase domain in the interval 52 to 351 (EFSFAVVQAN…DDITVVVVYI (300 aa)). Positions 83, 84, 283, and 342 each coordinate Mn(2+).

The protein belongs to the PP2C family. The cofactor is Mg(2+). Mn(2+) is required as a cofactor.

It carries out the reaction O-phospho-L-seryl-[protein] + H2O = L-seryl-[protein] + phosphate. It catalyses the reaction O-phospho-L-threonyl-[protein] + H2O = L-threonyl-[protein] + phosphate. This Oryza sativa subsp. japonica (Rice) protein is Probable protein phosphatase 2C 25.